The chain runs to 397 residues: 2-oxoglutarate and iron-dependent oxygenase domain-containing protein ICU11 (397 aa).

Residues 1-56 form a disordered region; it reads MCNQTPLRSMALDSSGKQPEQQQQQQPRASSGNGEARLKLRRTPNEEHEPENYEDL. Positions 18-27 are enriched in low complexity; it reads QPEQQQQQQP. One can recognise a Fe2OG dioxygenase domain in the interval 238 to 339; sequence SLDSHHGYIV…RANLILWCRS (102 aa). Fe cation-binding residues include His-260, Asp-262, and His-320. Arg-330 provides a ligand contact to 2-oxoglutarate.

Fe(2+) serves as cofactor. It depends on L-ascorbate as a cofactor. As to expression, expressed in roots, cotyledons, rosette leaves, cauline leaves and inflorescences.

The protein localises to the nucleus. The protein resides in the nucleoplasm. Its function is as follows. Participates in the epigenetic repression of flowering genes in association with CP2. Functions in the repression of several members of the MADS-box transcription factors family, including SEP3, during vegetative development via histone modification. The chain is 2-oxoglutarate and iron-dependent oxygenase domain-containing protein ICU11 from Arabidopsis thaliana (Mouse-ear cress).